The sequence spans 461 residues: Fumarate hydratase class II (461 aa).

Substrate is bound by residues serine 97 to threonine 99, histidine 127 to aspartate 130, serine 137 to asparagine 139, and threonine 185. Histidine 186 acts as the Proton donor/acceptor in catalysis. Serine 316 is a catalytic residue. Substrate contacts are provided by residues serine 317 and lysine 322–asparagine 324.

Belongs to the class-II fumarase/aspartase family. Fumarase subfamily. Homotetramer.

The protein resides in the cytoplasm. The enzyme catalyses (S)-malate = fumarate + H2O. Its pathway is carbohydrate metabolism; tricarboxylic acid cycle; (S)-malate from fumarate: step 1/1. Its function is as follows. Involved in the TCA cycle. Catalyzes the stereospecific interconversion of fumarate to L-malate. The protein is Fumarate hydratase class II of Staphylococcus aureus (strain COL).